The following is a 442-amino-acid chain: Cation channel sperm-associated protein 4 (442 aa).

Over 1–66 (MSEKHKWWQQ…TQMYIKQLLR (66 aa)) the chain is Cytoplasmic. Residues 67–88 (HPAFQLLLAFLLLSNAITIALR) traverse the membrane as a helical segment. Residues 89 to 98 (TNSYLGQKHY) lie on the Extracellular side of the membrane. A helical transmembrane segment spans residues 99-125 (ELFSTIDDIVLTILICEVLLGWLNGFW). Residues 126 to 129 (IFWK) lie on the Cytoplasmic side of the membrane. Residues 130–153 (DGWNILNFAIVFILFMGFFIKQLD) form a helical membrane-spanning segment. Over 154-156 (MVA) the chain is Extracellular. A helical membrane pass occupies residues 157-175 (ITYPLRVLRLVHVCMAVEP). The Cytoplasmic portion of the chain corresponds to 176 to 188 (LARIIKVILQSMP). The chain crosses the membrane as a helical span at residues 189-212 (DLANVMALILFFMLVFSVFGVTLF). Residues 213–222 (GAFVPKHFQN) are Extracellular-facing. An intramembrane region (helical; Pore-forming) is located at residues 223–234 (MGVALYTLFICI). Residues 235–255 (TQDGWLDIYTDFQMDEREYAM) lie on the Extracellular side of the membrane. The helical transmembrane segment at 256–283 (EVGGAIYFAVFITLGAFIGLNLFVVVVT) threads the bilayer. Residues 284–442 (TNLEQMMKTG…NMVNKHKFSH (159 aa)) are Cytoplasmic-facing.

This sequence belongs to the cation channel sperm-associated (TC 1.A.1.19) family. Component of the CatSper complex or CatSpermasome composed of the core pore-forming members CATSPER1, CATSPER2, CATSPER3 and CATSPER4 as well as auxiliary members CATSPERB, CATSPERG2, CATSPERD, CATSPERE, CATSPERZ, C2CD6/CATSPERT, SLCO6C1, TMEM249, TMEM262 and EFCAB9. HSPA1 may be an additional auxiliary complex member. The core complex members CATSPER1, CATSPER2, CATSPER3 and CATSPER4 form a heterotetrameric channel. The auxiliary CATSPERB, CATSPERG2, CATSPERD and CATSPERE subunits form a pavilion-like structure over the pore which stabilizes the complex through interactions with CATSPER4, CATSPER3, CATSPER1 and CATSPER2 respectively. SLCO6C1 interacts with CATSPERE and TMEM262/CATSPERH interacts with CATSPERB, further stabilizing the complex. C2CD6/CATSPERT interacts at least with CATSPERD and is required for targeting the CatSper complex in the flagellar membrane. Testis-specific.

It localises to the cell projection. The protein localises to the cilium. It is found in the flagellum membrane. The enzyme catalyses Ca(2+)(in) = Ca(2+)(out). Its activity is regulated as follows. In contrast to the human ortholog, not activated by progesterone. Activated by intracellular alkalinization. Its function is as follows. Pore-forming subunit of the CatSper complex, a sperm-specific voltage-gated calcium channel that plays a central role in sperm cell hyperactivation. Controls calcium entry to mediate the hyperactivated motility, a step needed for sperm motility which is essential late in the preparation of sperm for fertilization. This Mus musculus (Mouse) protein is Cation channel sperm-associated protein 4 (Catsper4).